The chain runs to 237 residues: Bax inhibitor 1 (237 aa).

Topologically, residues 1-29 (MNIFDRKINFDALLKFSHITPSTQQHLKK) are cytoplasmic. Lysine 7 is covalently cross-linked (Glycyl lysine isopeptide (Lys-Gly) (interchain with G-Cter in ubiquitin)). A helical transmembrane segment spans residues 30-50 (VYASFALCMFVAAAGAYVHVV). The Lumenal segment spans residues 51–52 (TH). The helical transmembrane segment at 53–73 (FIQAGLLSALGSLALMIWLMA) threads the bilayer. The Cytoplasmic segment spans residues 74-86 (TPHSHETEQKRLG). Residues 87–107 (LLAGFAFLTGVGLGPALELCI) form a helical membrane-spanning segment. Over 108–112 (AVNPS) the chain is Lumenal. Residues 113-133 (ILPTAFMGTAMIFTCFSLSAL) form a helical membrane-spanning segment. The Cytoplasmic segment spans residues 134 to 139 (YARRRS). The chain crosses the membrane as a helical span at residues 140–160 (YLFLGGILMSAMSLMLLSSLG). The Lumenal portion of the chain corresponds to 161–166 (NLFFGS). A helical membrane pass occupies residues 167-187 (IWLFQANLYLGLLVMCGFVLF). Topologically, residues 188–206 (DTQLIIEKAEHGDKDYIWH) are cytoplasmic. The segment at residues 207–227 (CVDLFLDFVTLFRKLMLILAF) is an intramembrane region (helical). Topologically, residues 228–237 (NEKDKKKEKK) are cytoplasmic.

Belongs to the BI1 family. Interacts with BCL2. Interacts with BCL2L1. Interacts with ERN1. In terms of processing, ubiquitinated by BFAR, leading to proteasomal degradation. Highly abundant in adult testis.

The protein resides in the endoplasmic reticulum membrane. Endoplasmic reticulum (ER)-resident protein that confers cellular protection as an anti-apoptotic protein by limiting multiple stress-inducing pathways surrounding the endoplasmic reticulum and mitochondria. Inhibits the activities of the key sensor for the endoplasmic reticulum unfolded protein response IRE1alpha/ERN1 both directly and by blocking BAX/BAK binding. Modulates ER calcium homeostasis by acting as a calcium-leak channel. Negatively regulates autophagy and autophagosome formation, especially during periods of nutrient deprivation, and reduces cell survival during starvation. The protein is Bax inhibitor 1 (Tmbim6) of Mus musculus (Mouse).